Consider the following 97-residue polypeptide: UPF0729 protein AAEL015238 (97 aa).

Residues 69-97 form a disordered region; that stretch reads EVAASGSGSNGTATAVGSEGEAEETKKSQ. Positions 74–83 are enriched in polar residues; the sequence is GSGSNGTATA.

Belongs to the UPF0729 family.

The chain is UPF0729 protein AAEL015238 from Aedes aegypti (Yellowfever mosquito).